A 566-amino-acid chain; its full sequence is SRSF protein kinase 3 (566 aa).

The segment covering 1–13 has biased composition (gly residues); the sequence is MSASTGGGGGGDS. Positions 1 to 60 are disordered; it reads MSASTGGGGGGDSGSSSSSSSQASCGPEPSGSELAPPTPAPRMLQGLLGSDDEEQEDPKD. Residues 14 to 26 are compositionally biased toward low complexity; that stretch reads GSSSSSSSQASCG. Phosphoserine is present on S50. The Protein kinase domain occupies 79–564; the sequence is YHVVRKLGWG…AADCLQHPWL (486 aa). ATP is bound by residues 85 to 93 and K108; that span reads LGWGHFSTV. The Proton acceptor role is filled by D212. The segment covering 236–254 has biased composition (polar residues); that stretch reads EWQQSGAPPPSRSTVSTAP. Disordered regions lie at residues 236–283 and 295–353; these read EWQQ…LLEE and EAAA…SGFS. A compositionally biased stretch (basic residues) spans 263 to 278; that stretch reads SKNKRKKMRRKRKQQK. At S329 the chain carries Phosphoserine. Over residues 330–339 the composition is skewed to low complexity; that stretch reads PASSSPAPGG. The segment covering 344–353 has biased composition (polar residues); that stretch reads SPGSQTSGFS.

Belongs to the protein kinase superfamily. As to expression, highly expressed in skeletal muscle, heart, uterus and parorchis. Weakly expressed in brain, stomach, small intestine and ovary.

Its subcellular location is the nucleus. It is found in the cytoplasm. It catalyses the reaction L-seryl-[protein] + ATP = O-phospho-L-seryl-[protein] + ADP + H(+). The catalysed reaction is L-threonyl-[protein] + ATP = O-phospho-L-threonyl-[protein] + ADP + H(+). Its function is as follows. Serine/arginine-rich protein-specific kinase which specifically phosphorylates its substrates at serine residues located in regions rich in arginine/serine dipeptides, known as RS domains. Phosphorylates the SR splicing factor SRSF1 and the lamin-B receptor (LBR) in vitro. Required for normal muscle development. The polypeptide is SRSF protein kinase 3 (SRPK3) (Sus scrofa (Pig)).